Here is a 363-residue protein sequence, read N- to C-terminus: Ribosomal RNA large subunit methyltransferase M (363 aa).

S-adenosyl-L-methionine contacts are provided by residues Ser-194, 227–230 (CPGG), Asp-246, Asp-266, and Asp-284. The Proton acceptor role is filled by Lys-313.

Belongs to the class I-like SAM-binding methyltransferase superfamily. RNA methyltransferase RlmE family. RlmM subfamily. As to quaternary structure, monomer.

It localises to the cytoplasm. The enzyme catalyses cytidine(2498) in 23S rRNA + S-adenosyl-L-methionine = 2'-O-methylcytidine(2498) in 23S rRNA + S-adenosyl-L-homocysteine + H(+). Catalyzes the 2'-O-methylation at nucleotide C2498 in 23S rRNA. The chain is Ribosomal RNA large subunit methyltransferase M from Haemophilus influenzae (strain 86-028NP).